The sequence spans 151 residues: NADPH-dependent 7-cyano-7-deazaguanine reductase (151 aa).

Cysteine 49 serves as the catalytic Thioimide intermediate. The active-site Proton donor is aspartate 56. Residues 71–73 (IES) and 90–91 (HE) each bind substrate.

This sequence belongs to the GTP cyclohydrolase I family. QueF type 1 subfamily.

The protein resides in the cytoplasm. The catalysed reaction is 7-aminomethyl-7-carbaguanine + 2 NADP(+) = 7-cyano-7-deazaguanine + 2 NADPH + 3 H(+). The protein operates within tRNA modification; tRNA-queuosine biosynthesis. Its function is as follows. Catalyzes the NADPH-dependent reduction of 7-cyano-7-deazaguanine (preQ0) to 7-aminomethyl-7-deazaguanine (preQ1). This is NADPH-dependent 7-cyano-7-deazaguanine reductase from Caulobacter vibrioides (strain ATCC 19089 / CIP 103742 / CB 15) (Caulobacter crescentus).